Here is a 72-residue protein sequence, read N- to C-terminus: Translation initiation factor IF-1 2 (72 aa).

The 72-residue stretch at 1–72 (MAKDDVIQMQ…SRARIVFRTK (72 aa)) folds into the S1-like domain.

It belongs to the IF-1 family. Component of the 30S ribosomal translation pre-initiation complex which assembles on the 30S ribosome in the order IF-2 and IF-3, IF-1 and N-formylmethionyl-tRNA(fMet); mRNA recruitment can occur at any time during PIC assembly.

The protein localises to the cytoplasm. Its function is as follows. One of the essential components for the initiation of protein synthesis. Stabilizes the binding of IF-2 and IF-3 on the 30S subunit to which N-formylmethionyl-tRNA(fMet) subsequently binds. Helps modulate mRNA selection, yielding the 30S pre-initiation complex (PIC). Upon addition of the 50S ribosomal subunit IF-1, IF-2 and IF-3 are released leaving the mature 70S translation initiation complex. This is Translation initiation factor IF-1 2 from Cupriavidus metallidurans (strain ATCC 43123 / DSM 2839 / NBRC 102507 / CH34) (Ralstonia metallidurans).